Consider the following 436-residue polypeptide: Serine carboxypeptidase-like 15 (436 aa).

The signal sequence occupies residues 1 to 24 (MASWIFKLLLLLQCVLVLIQHADS). 3 disulfide bridges follow: cysteine 83-cysteine 326, cysteine 247-cysteine 261, and cysteine 285-cysteine 292. Asparagine 104 carries N-linked (GlcNAc...) asparagine glycosylation. Residue serine 179 is part of the active site. N-linked (GlcNAc...) asparagine glycans are attached at residues asparagine 306 and asparagine 345. The active site involves aspartate 361. Asparagine 377 is a glycosylation site (N-linked (GlcNAc...) asparagine). Histidine 414 is an active-site residue.

It belongs to the peptidase S10 family. In terms of tissue distribution, expressed in seedlings and roots.

It localises to the secreted. In terms of biological role, probable carboxypeptidase. The polypeptide is Serine carboxypeptidase-like 15 (SCPL15) (Arabidopsis thaliana (Mouse-ear cress)).